A 335-amino-acid chain; its full sequence is Methylthioribose-1-phosphate isomerase (335 aa).

Substrate contacts are provided by residues 43–45 (RGA), Arg86, and Gln193. Asp234 acts as the Proton donor in catalysis. Residue 244–245 (NK) coordinates substrate.

It belongs to the eIF-2B alpha/beta/delta subunits family. MtnA subfamily.

The enzyme catalyses 5-(methylsulfanyl)-alpha-D-ribose 1-phosphate = 5-(methylsulfanyl)-D-ribulose 1-phosphate. It participates in amino-acid biosynthesis; L-methionine biosynthesis via salvage pathway; L-methionine from S-methyl-5-thio-alpha-D-ribose 1-phosphate: step 1/6. Functionally, catalyzes the interconversion of methylthioribose-1-phosphate (MTR-1-P) into methylthioribulose-1-phosphate (MTRu-1-P). In Parabacteroides distasonis (strain ATCC 8503 / DSM 20701 / CIP 104284 / JCM 5825 / NCTC 11152), this protein is Methylthioribose-1-phosphate isomerase.